The chain runs to 467 residues: 3-isopropylmalate dehydratase large subunit (467 aa).

Residues Cys347, Cys407, and Cys410 each contribute to the [4Fe-4S] cluster site.

It belongs to the aconitase/IPM isomerase family. LeuC type 1 subfamily. In terms of assembly, heterodimer of LeuC and LeuD. The cofactor is [4Fe-4S] cluster.

It catalyses the reaction (2R,3S)-3-isopropylmalate = (2S)-2-isopropylmalate. It functions in the pathway amino-acid biosynthesis; L-leucine biosynthesis; L-leucine from 3-methyl-2-oxobutanoate: step 2/4. Catalyzes the isomerization between 2-isopropylmalate and 3-isopropylmalate, via the formation of 2-isopropylmaleate. The chain is 3-isopropylmalate dehydratase large subunit from Gloeothece citriformis (strain PCC 7424) (Cyanothece sp. (strain PCC 7424)).